The following is a 214-amino-acid chain: Imidazole glycerol phosphate synthase subunit HisH (214 aa).

A Glutamine amidotransferase type-1 domain is found at 3–211; sequence IIAVIDYDMG…VEQVQATLAT (209 aa). Cys81 serves as the catalytic Nucleophile. Residues His186 and Glu188 contribute to the active site.

In terms of assembly, heterodimer of HisH and HisF.

The protein resides in the cytoplasm. The enzyme catalyses 5-[(5-phospho-1-deoxy-D-ribulos-1-ylimino)methylamino]-1-(5-phospho-beta-D-ribosyl)imidazole-4-carboxamide + L-glutamine = D-erythro-1-(imidazol-4-yl)glycerol 3-phosphate + 5-amino-1-(5-phospho-beta-D-ribosyl)imidazole-4-carboxamide + L-glutamate + H(+). It carries out the reaction L-glutamine + H2O = L-glutamate + NH4(+). The protein operates within amino-acid biosynthesis; L-histidine biosynthesis; L-histidine from 5-phospho-alpha-D-ribose 1-diphosphate: step 5/9. Its function is as follows. IGPS catalyzes the conversion of PRFAR and glutamine to IGP, AICAR and glutamate. The HisH subunit catalyzes the hydrolysis of glutamine to glutamate and ammonia as part of the synthesis of IGP and AICAR. The resulting ammonia molecule is channeled to the active site of HisF. The sequence is that of Imidazole glycerol phosphate synthase subunit HisH from Acaryochloris marina (strain MBIC 11017).